Reading from the N-terminus, the 823-residue chain is Lon protease (823 aa).

Residues 51-246 enclose the Lon N-terminal domain; the sequence is IPILPLRNMV…RLLFILNREY (196 aa). 397-404 lines the ATP pocket; sequence GPPGVGKT. The Lon proteolytic domain maps to 633–815; the sequence is NDYAGVVTGL…QQVVDLALLR (183 aa). Catalysis depends on residues serine 721 and lysine 764.

It belongs to the peptidase S16 family. As to quaternary structure, homohexamer. Organized in a ring with a central cavity.

Its subcellular location is the cytoplasm. It catalyses the reaction Hydrolysis of proteins in presence of ATP.. Its function is as follows. ATP-dependent serine protease that mediates the selective degradation of mutant and abnormal proteins as well as certain short-lived regulatory proteins. Required for cellular homeostasis and for survival from DNA damage and developmental changes induced by stress. Degrades polypeptides processively to yield small peptide fragments that are 5 to 10 amino acids long. Binds to DNA in a double-stranded, site-specific manner. This is Lon protease from Parabacteroides distasonis (strain ATCC 8503 / DSM 20701 / CIP 104284 / JCM 5825 / NCTC 11152).